The following is an 885-amino-acid chain: Aconitate hydratase A (885 aa).

Residues Cys-425, Cys-491, and Cys-494 each coordinate [4Fe-4S] cluster.

It belongs to the aconitase/IPM isomerase family. Monomer. The cofactor is [4Fe-4S] cluster.

It catalyses the reaction citrate = D-threo-isocitrate. The enzyme catalyses (2S,3R)-3-hydroxybutane-1,2,3-tricarboxylate = 2-methyl-cis-aconitate + H2O. Its pathway is carbohydrate metabolism; tricarboxylic acid cycle; isocitrate from oxaloacetate: step 2/2. It functions in the pathway organic acid metabolism; propanoate degradation. Functionally, involved in the catabolism of short chain fatty acids (SCFA) via the tricarboxylic acid (TCA)(acetyl degradation route) and probably the 2-methylcitrate cycle I (propionate degradation route). Catalyzes the reversible isomerization of citrate to isocitrate via cis-aconitate. Could catalyze the hydration of 2-methyl-cis-aconitate to yield (2R,3S)-2-methylisocitrate. The apo form of AcnA functions as a RNA-binding regulatory protein. This is Aconitate hydratase A (acnA) from Rickettsia bellii (strain RML369-C).